The sequence spans 442 residues: MKSLYIKTYGCQMNVYDSILMENIIKPLGFNVVNDVEKADLVILNTCHIREKAAEKLYSELGKIHSSRKNKEITIVAAGCVAQAEGEEIFRRAPFVDIVVGPQSITTLPELIVKASRSKGHVINTDFPKVMKFDRLSDECYGNSQGSSAFLSIQEGCDKFCTFCVVPYTRGAEYSRPVNEIFREALKLVANGAKEINLLGQNVNAYHGEYEGEVWDLGKLISHIAKIEKLERIRYTTSHPRDMHESLYLAHAEAPKLMPFIHLPVQSGSNKILRAMNRKYTTEEYLEIIERFRKLKPKIEFSSDFIVGFPGETEKDFEGTIKLVERVRYAQAYSFKYSTRPGTPGAERKDQVPEKVKTERLLHLQKLINKQQLEFNQSMVGKTIPVLFSNKKGKHQNQIIGKSPYMQSVCIDDPEDKCRDKIVNVRILEAWQNSLLGRELQE.

An MTTase N-terminal domain is found at 2–117 (KSLYIKTYGC…LPELIVKASR (116 aa)). [4Fe-4S] cluster contacts are provided by Cys11, Cys47, Cys80, Cys157, Cys161, and Cys164. In terms of domain architecture, Radical SAM core spans 143-374 (NSQGSSAFLS…QKLINKQQLE (232 aa)). Positions 377–441 (QSMVGKTIPV…QNSLLGRELQ (65 aa)) constitute a TRAM domain.

The protein belongs to the methylthiotransferase family. MiaB subfamily. Monomer. The cofactor is [4Fe-4S] cluster.

Its subcellular location is the cytoplasm. It carries out the reaction N(6)-dimethylallyladenosine(37) in tRNA + (sulfur carrier)-SH + AH2 + 2 S-adenosyl-L-methionine = 2-methylsulfanyl-N(6)-dimethylallyladenosine(37) in tRNA + (sulfur carrier)-H + 5'-deoxyadenosine + L-methionine + A + S-adenosyl-L-homocysteine + 2 H(+). Catalyzes the methylthiolation of N6-(dimethylallyl)adenosine (i(6)A), leading to the formation of 2-methylthio-N6-(dimethylallyl)adenosine (ms(2)i(6)A) at position 37 in tRNAs that read codons beginning with uridine. In Wolbachia sp. subsp. Brugia malayi (strain TRS), this protein is tRNA-2-methylthio-N(6)-dimethylallyladenosine synthase.